Here is a 150-residue protein sequence, read N- to C-terminus: MVALVQRVSEAAVEIDGAPVGAIEHGLLILLGVHEDDTRTESAWCAEKCARLRVFPDADGKMDESLLDTGGDALVVPQFTLYGDTSVGNRPSFTEAAPPDRADRLYEHFVRELEGHLGQDVPTGEFGAMMDVRLTNDGPVTLWVERRADE.

The short motif at 138-139 is the Gly-cisPro motif, important for rejection of L-amino acids element; that stretch reads GP.

Belongs to the DTD family. In terms of assembly, homodimer.

It is found in the cytoplasm. The catalysed reaction is glycyl-tRNA(Ala) + H2O = tRNA(Ala) + glycine + H(+). It carries out the reaction a D-aminoacyl-tRNA + H2O = a tRNA + a D-alpha-amino acid + H(+). Its function is as follows. An aminoacyl-tRNA editing enzyme that deacylates mischarged D-aminoacyl-tRNAs. Also deacylates mischarged glycyl-tRNA(Ala), protecting cells against glycine mischarging by AlaRS. Acts via tRNA-based rather than protein-based catalysis; rejects L-amino acids rather than detecting D-amino acids in the active site. By recycling D-aminoacyl-tRNA to D-amino acids and free tRNA molecules, this enzyme counteracts the toxicity associated with the formation of D-aminoacyl-tRNA entities in vivo and helps enforce protein L-homochirality. This is D-aminoacyl-tRNA deacylase from Salinibacter ruber (strain DSM 13855 / M31).